A 311-amino-acid polypeptide reads, in one-letter code: Probable 5-dehydro-4-deoxyglucarate dehydratase (311 aa).

It belongs to the DapA family.

It carries out the reaction 5-dehydro-4-deoxy-D-glucarate + H(+) = 2,5-dioxopentanoate + CO2 + H2O. It participates in carbohydrate acid metabolism; D-glucarate degradation; 2,5-dioxopentanoate from D-glucarate: step 2/2. This is Probable 5-dehydro-4-deoxyglucarate dehydratase from Ralstonia nicotianae (strain ATCC BAA-1114 / GMI1000) (Ralstonia solanacearum).